The sequence spans 288 residues: Eukaryotic translation initiation factor 3 subunit G (288 aa).

Positions 1-35 (MSRVANNRDWADDEDLEDSNELPQSTTTTNKDGTQ) are disordered. Over residues 11 to 20 (ADDEDLEDSN) the composition is skewed to acidic residues. The segment covering 21 to 35 (ELPQSTTTTNKDGTQ) has biased composition (polar residues). In terms of domain architecture, RRM spans 208–286 (ATLRVTNVSE…LILRVEFAKK (79 aa)).

The protein belongs to the eIF-3 subunit G family. Component of the eukaryotic translation initiation factor 3 (eIF-3) complex.

The protein resides in the cytoplasm. In terms of biological role, RNA-binding component of the eukaryotic translation initiation factor 3 (eIF-3) complex, which is involved in protein synthesis of a specialized repertoire of mRNAs and, together with other initiation factors, stimulates binding of mRNA and methionyl-tRNAi to the 40S ribosome. The eIF-3 complex specifically targets and initiates translation of a subset of mRNAs involved in cell proliferation. This subunit can bind 18S rRNA. This chain is Eukaryotic translation initiation factor 3 subunit G (tif35), found in Botryotinia fuckeliana (strain B05.10) (Noble rot fungus).